Here is a 426-residue protein sequence, read N- to C-terminus: D-tagatose-1,6-bisphosphate aldolase subunit KbaZ (426 aa).

Belongs to the GatZ/KbaZ family. KbaZ subfamily. In terms of assembly, forms a complex with KbaY.

It functions in the pathway carbohydrate metabolism; D-tagatose 6-phosphate degradation; D-glyceraldehyde 3-phosphate and glycerone phosphate from D-tagatose 6-phosphate: step 2/2. In terms of biological role, component of the tagatose-1,6-bisphosphate aldolase KbaYZ that is required for full activity and stability of the Y subunit. Could have a chaperone-like function for the proper and stable folding of KbaY. When expressed alone, KbaZ does not show any aldolase activity. The sequence is that of D-tagatose-1,6-bisphosphate aldolase subunit KbaZ from Escherichia coli O7:K1 (strain IAI39 / ExPEC).